The sequence spans 146 residues: Large ribosomal subunit protein uL15 (146 aa).

A disordered region spans residues 1–52; that stretch reads MKLSNLSPKAGSKKRRRRVGRGIAAGQGASCGFGMRGQKSRSGTGTKAGFEG. The span at 11-20 shows a compositional bias: basic residues; sequence GSKKRRRRVG. Over residues 23-35 the composition is skewed to gly residues; it reads IAAGQGASCGFGM.

This sequence belongs to the universal ribosomal protein uL15 family. In terms of assembly, part of the 50S ribosomal subunit.

Its function is as follows. Binds to the 23S rRNA. The chain is Large ribosomal subunit protein uL15 from Picosynechococcus sp. (strain ATCC 27264 / PCC 7002 / PR-6) (Agmenellum quadruplicatum).